Here is an 807-residue protein sequence, read N- to C-terminus: PGC-1 and ERR-induced regulator in muscle protein 1 (807 aa).

Disordered stretches follow at residues 29–80 (QADL…EDVA), 121–391 (CPGQ…TPAS), and 517–548 (PSHE…AGSR). 2 stretches are compositionally biased toward low complexity: residues 40 to 52 (SSDI…SGSS) and 145 to 160 (PAPS…PESP). Positions 162–171 (HSDNPQSSPD) are enriched in polar residues. Residues 180-194 (PGRKKRRAVGAKGTK) show a composition bias toward basic residues. Polar residues-rich tracts occupy residues 195–211 (HSGS…SPQL), 311–346 (KPQS…STPA), and 363–391 (ALST…TPAS). Serine 198 carries the phosphoserine modification. Phosphothreonine is present on threonine 534. An Omega-N-methylarginine modification is found at arginine 548.

In terms of tissue distribution, highly expressed in skeletal muscles and heart with lower levels in brown adipose tissue (at protein level). Muscle-specific expression is increased by endurance exercise.

It is found in the cytoplasm. The protein resides in the nucleus. Regulates the expression of selective PPARGC1A/B and ESRRA/B/G target genes with roles in glucose and lipid metabolism, energy transfer, contractile function, muscle mitochondrial biogenesis and oxidative capacity. Required for the efficient induction of MT-CO2, MT-CO3, COX4I1, TFB1M, TFB2M, POLRMT and SIRT3 by PPARGC1A. Positively regulates the PPARGC1A/ESRRG-induced expression of CKMT2, TNNI3 and SLC2A4 and negatively regulates the PPARGC1A/ESRRG-induced expression of PDK4. The chain is PGC-1 and ERR-induced regulator in muscle protein 1 (Perm1) from Mus musculus (Mouse).